The chain runs to 377 residues: Bradyzoite pseudokinase 1 (377 aa).

The N-terminal stretch at 1 to 26 (MANTSVRRRQLLSSVLLLQWLTTVLG) is a signal peptide. A disordered region spans residues 39 to 58 (HGQFPSLRRTEGVSQSGSGH). Positions 48-354 (TEGVSQSGSG…IEEIMKDPLF (307 aa)) constitute a Protein kinase domain.

Belongs to the protein kinase superfamily. STE Ser/Thr protein kinase family. WNG subfamily. Forms a complex composed of BPK1, MCP4, MAG1, GRA8 and GRA9. Interacts with MCP4. Interacts with MAG1. Interacts with GRA8. Interacts with GRA9.

The protein localises to the secreted. Required for the growth, maintenance, and/or stability, and thus infectivity, of bradyzoite cysts. This chain is Bradyzoite pseudokinase 1, found in Toxoplasma gondii.